Here is a 60-residue protein sequence, read N- to C-terminus: Large ribosomal subunit protein uL30 (60 aa).

This sequence belongs to the universal ribosomal protein uL30 family. As to quaternary structure, part of the 50S ribosomal subunit.

In Moorella thermoacetica (strain ATCC 39073 / JCM 9320), this protein is Large ribosomal subunit protein uL30.